A 294-amino-acid polypeptide reads, in one-letter code: Ribosomal RNA small subunit methyltransferase A (294 aa).

Residues Asn-29, Val-31, Gly-56, Glu-77, Asp-107, and Asn-126 each contribute to the S-adenosyl-L-methionine site.

It belongs to the class I-like SAM-binding methyltransferase superfamily. rRNA adenine N(6)-methyltransferase family. RsmA subfamily.

It localises to the cytoplasm. It carries out the reaction adenosine(1518)/adenosine(1519) in 16S rRNA + 4 S-adenosyl-L-methionine = N(6)-dimethyladenosine(1518)/N(6)-dimethyladenosine(1519) in 16S rRNA + 4 S-adenosyl-L-homocysteine + 4 H(+). In terms of biological role, specifically dimethylates two adjacent adenosines (A1518 and A1519) in the loop of a conserved hairpin near the 3'-end of 16S rRNA in the 30S particle. May play a critical role in biogenesis of 30S subunits. The sequence is that of Ribosomal RNA small subunit methyltransferase A from Mycobacterium sp. (strain MCS).